Reading from the N-terminus, the 262-residue chain is Type III pantothenate kinase (262 aa).

9-16 (DAGNSRIK) contributes to the ATP binding site. Substrate-binding positions include Y96 and 103 to 106 (GSDR). D105 serves as the catalytic Proton acceptor. T129 is an ATP binding site. T189 is a binding site for substrate.

It belongs to the type III pantothenate kinase family. As to quaternary structure, homodimer. NH4(+) serves as cofactor. The cofactor is K(+).

Its subcellular location is the cytoplasm. It catalyses the reaction (R)-pantothenate + ATP = (R)-4'-phosphopantothenate + ADP + H(+). It participates in cofactor biosynthesis; coenzyme A biosynthesis; CoA from (R)-pantothenate: step 1/5. In terms of biological role, catalyzes the phosphorylation of pantothenate (Pan), the first step in CoA biosynthesis. This is Type III pantothenate kinase from Burkholderia vietnamiensis (strain G4 / LMG 22486) (Burkholderia cepacia (strain R1808)).